Consider the following 49-residue polypeptide: Astexin-2 (49 aa).

Residues 1–25 (MTKRTTIAARRVGLIDLGKATRQTK) constitute a propeptide that is removed on maturation. A cross-link (isoaspartyl glycine isopeptide (Gly-Asp)) is located at residues 26–34 (GLTQIQALD).

In terms of processing, this lasso peptide is hydrolyzed to a linear form by the isopeptidase AtxE2, in vitro. The isopeptidase AtxE2 only recognizes the threaded form (but not the unthreaded form).

It localises to the cytoplasm. Its subcellular location is the secreted. Functionally, shows weak antimicrobial activity against its phylogenetic relative Caulobacter crescentus. Does not show activity against other bacteria tested (E.coli, Vibrio sp, Burkhoderia thailandensis, and Salmonella newport). This chain is Astexin-2, found in Asticcacaulis excentricus (strain ATCC 15261 / DSM 4724 / KCTC 12464 / NCIMB 9791 / VKM B-1370 / CB 48).